A 228-amino-acid polypeptide reads, in one-letter code: Sec-independent protein translocase protein TatB (228 aa).

The chain crosses the membrane as a helical span at residues 1–21 (MFDFGLGELVFVGIIALIVLG). Disordered stretches follow at residues 138-162 (RSYA…AETD) and 195-228 (PVPH…VRKS). Residues 206–228 (AISRKRDLRPKSRAKPKLRVRKS) are compositionally biased toward basic residues.

This sequence belongs to the TatB family. As to quaternary structure, the Tat system comprises two distinct complexes: a TatABC complex, containing multiple copies of TatA, TatB and TatC subunits, and a separate TatA complex, containing only TatA subunits. Substrates initially bind to the TatABC complex, which probably triggers association of the separate TatA complex to form the active translocon.

The protein localises to the cell inner membrane. Its function is as follows. Part of the twin-arginine translocation (Tat) system that transports large folded proteins containing a characteristic twin-arginine motif in their signal peptide across membranes. Together with TatC, TatB is part of a receptor directly interacting with Tat signal peptides. TatB may form an oligomeric binding site that transiently accommodates folded Tat precursor proteins before their translocation. The polypeptide is Sec-independent protein translocase protein TatB (Neisseria meningitidis serogroup A / serotype 4A (strain DSM 15465 / Z2491)).